The following is a 78-amino-acid chain: Large ribosomal subunit protein bL28 (78 aa).

This sequence belongs to the bacterial ribosomal protein bL28 family.

In Hamiltonella defensa subsp. Acyrthosiphon pisum (strain 5AT), this protein is Large ribosomal subunit protein bL28.